The chain runs to 639 residues: Synaptotagmin-16 (639 aa).

The span at 95–119 (NSDLQDSVQTASPTLGQQAEDSSSV) shows a compositional bias: polar residues. The disordered stretch occupies residues 95-191 (NSDLQDSVQT…SSESDEDVTK (97 aa)). Residues 121-134 (PPWPSKIPGAPKPQ) show a composition bias toward pro residues. Basic and acidic residues predominate over residues 142 to 151 (EEDHHSERQR). A compositionally biased stretch (acidic residues) spans 174 to 187 (GDDEEPSTSSESDE). Residues 344 to 463 (KCGDLDVIFE…HPEGEMKVTL (120 aa)) enclose the C2 1 domain. A disordered region spans residues 470–496 (NLSSGESPLSPSVVSHSDSASSTQSLS). Residues 476-496 (SPLSPSVVSHSDSASSTQSLS) are compositionally biased toward low complexity. A C2 2 domain is found at 499–634 (GVPELLVGLS…SKGQQTCRWH (136 aa)).

The protein belongs to the synaptotagmin family. As to quaternary structure, homodimer. Can also form heterodimers. In terms of tissue distribution, highly expressed in heart and testis. Moderately expressed in kidney.

In terms of biological role, may be involved in the trafficking and exocytosis of secretory vesicles in non-neuronal tissues. Is Ca(2+)-independent. This chain is Synaptotagmin-16 (Syt16), found in Mus musculus (Mouse).